A 226-amino-acid polypeptide reads, in one-letter code: Deoxyribose-phosphate aldolase (226 aa).

Asp94 serves as the catalytic Proton donor/acceptor. Lys156 (schiff-base intermediate with acetaldehyde) is an active-site residue. The active-site Proton donor/acceptor is Lys185.

The protein belongs to the DeoC/FbaB aldolase family. DeoC type 1 subfamily.

The protein localises to the cytoplasm. It carries out the reaction 2-deoxy-D-ribose 5-phosphate = D-glyceraldehyde 3-phosphate + acetaldehyde. Its pathway is carbohydrate degradation; 2-deoxy-D-ribose 1-phosphate degradation; D-glyceraldehyde 3-phosphate and acetaldehyde from 2-deoxy-alpha-D-ribose 1-phosphate: step 2/2. In terms of biological role, catalyzes a reversible aldol reaction between acetaldehyde and D-glyceraldehyde 3-phosphate to generate 2-deoxy-D-ribose 5-phosphate. The chain is Deoxyribose-phosphate aldolase from Burkholderia orbicola (strain MC0-3).